A 416-amino-acid polypeptide reads, in one-letter code: UDP-N-acetylglucosamine 1-carboxyvinyltransferase (416 aa).

22 to 23 (KN) lines the phosphoenolpyruvate pocket. Residue R92 coordinates UDP-N-acetyl-alpha-D-glucosamine. The Proton donor role is filled by C116. C116 carries the 2-(S-cysteinyl)pyruvic acid O-phosphothioketal modification. Residues 121 to 125 (RPVDQ), D304, and I326 contribute to the UDP-N-acetyl-alpha-D-glucosamine site.

The protein belongs to the EPSP synthase family. MurA subfamily.

The protein localises to the cytoplasm. The enzyme catalyses phosphoenolpyruvate + UDP-N-acetyl-alpha-D-glucosamine = UDP-N-acetyl-3-O-(1-carboxyvinyl)-alpha-D-glucosamine + phosphate. It functions in the pathway cell wall biogenesis; peptidoglycan biosynthesis. Its function is as follows. Cell wall formation. Adds enolpyruvyl to UDP-N-acetylglucosamine. The chain is UDP-N-acetylglucosamine 1-carboxyvinyltransferase from Aromatoleum aromaticum (strain DSM 19018 / LMG 30748 / EbN1) (Azoarcus sp. (strain EbN1)).